The chain runs to 249 residues: Phosphomannomutase 2 (249 aa).

Asp-12 functions as the Nucleophile in the catalytic mechanism. Residues Asp-12 and Asp-14 each coordinate Mg(2+). Asp-14 acts as the Proton donor/acceptor in catalysis. Positions 21, 123, 134, 141, 179, and 181 each coordinate alpha-D-mannose 1-phosphate. Residue Asp-209 coordinates Mg(2+).

The protein belongs to the eukaryotic PMM family. In terms of assembly, homodimer.

It localises to the cytoplasm. The catalysed reaction is alpha-D-mannose 1-phosphate = D-mannose 6-phosphate. It participates in nucleotide-sugar biosynthesis; GDP-alpha-D-mannose biosynthesis; alpha-D-mannose 1-phosphate from D-fructose 6-phosphate: step 2/2. Its function is as follows. Involved in the synthesis of the GDP-mannose and dolichol-phosphate-mannose required for a number of critical mannosyl transfer reactions. The sequence is that of Phosphomannomutase 2 (pmmB) from Dictyostelium discoideum (Social amoeba).